A 327-amino-acid polypeptide reads, in one-letter code: Fructose-1,6-bisphosphatase class 1 (327 aa).

Residues Glu-84, Asp-103, Leu-105, and Asp-106 each coordinate Mg(2+). Substrate contacts are provided by residues 106–109 (DGSS), Asn-198, and Lys-264. Glu-270 contributes to the Mg(2+) binding site.

It belongs to the FBPase class 1 family. As to quaternary structure, homotetramer. The cofactor is Mg(2+).

It localises to the cytoplasm. It carries out the reaction beta-D-fructose 1,6-bisphosphate + H2O = beta-D-fructose 6-phosphate + phosphate. It functions in the pathway carbohydrate biosynthesis; gluconeogenesis. The sequence is that of Fructose-1,6-bisphosphatase class 1 from Psychrobacter cryohalolentis (strain ATCC BAA-1226 / DSM 17306 / VKM B-2378 / K5).